The sequence spans 339 residues: Fructose-1,6-bisphosphatase, cytosolic (339 aa).

5 residues coordinate Mg(2+): glutamate 71, glutamate 100, aspartate 121, leucine 123, and aspartate 124. Substrate contacts are provided by residues 124–127, asparagine 215, tyrosine 247, tyrosine 267, and lysine 277; that span reads DGSS. Glutamate 283 serves as a coordination point for Mg(2+).

This sequence belongs to the FBPase class 1 family. Mg(2+) serves as cofactor.

It localises to the cytoplasm. It catalyses the reaction beta-D-fructose 1,6-bisphosphate + H2O = beta-D-fructose 6-phosphate + phosphate. The sequence is that of Fructose-1,6-bisphosphatase, cytosolic from Oryza sativa subsp. indica (Rice).